Consider the following 429-residue polypeptide: Keratin, type I cytoskeletal 47 kDa (429 aa).

Residues 1–16 (MTSYRSSSASYYSGSS) are compositionally biased toward low complexity. Residues 1–20 (MTSYRSSSASYYSGSSSKGG) form a disordered region. Residues 1–69 (MTSYRSSSAS…EAASSSFGGN (69 aa)) form a head region. The coil 1A stretch occupies residues 70–105 (EKHAMQNLNDRLASYLEKVRALEATNSDLEGKIRNW). Residues 70–385 (EKHAMQNLND…RLLEGELGQV (316 aa)) enclose the IF rod domain. The tract at residues 106–127 (YDKQSDAGIGAGSKDYSKYFEI) is linker 1. A coil 1B region spans residues 128 to 219 (IAELRNKIRA…KNHEEEMSHA (92 aa)). The interval 220–242 (KSQSAGKVSVEMDAALGVDLTSI) is linker 12. The coil 2 stretch occupies residues 243–381 (LNNMRADYEI…QTYRRLLEGE (139 aa)). A tail region spans residues 382-429 (LGQVTTVANTSSVESKTESSSTSTTRTRMVKTIVEEVVDGKVVSSRVE). The tract at residues 389–408 (ANTSSVESKTESSSTSTTRT) is disordered. Over residues 391–408 (TSSVESKTESSSTSTTRT) the composition is skewed to low complexity.

Belongs to the intermediate filament family. Heterotetramer of two type I and two type II keratins.

The polypeptide is Keratin, type I cytoskeletal 47 kDa (xk81a1) (Xenopus laevis (African clawed frog)).